The following is a 420-amino-acid chain: Putative phosphate permease HI_1604 (420 aa).

A run of 12 helical transmembrane segments spans residues 8–28 (GSWLVWITAVFGFFMAFGIGA), 49–69 (AIIIALIFESAGAYLAGGEVT), 88–108 (ILALGMLSTLFASGAWLFIAT), 112–132 (WPVSGTHTIIGAIIGFACITI), 145–165 (IVGSWFVTPVIAGILAYAIFA), 185–205 (GPYYMGITVFVLCIVTMKKGL), 216–236 (ETLIISLAISLIGMFFFHFYF), 250–270 (FGAVEKVFSILMLLTACAMAF), 300–320 (GGALTWWILPLGALGIAVGLI), 343–363 (FAAQFATAMTVVVASGTGLPI), 370–390 (VGAILGIGFARGIAALNLTVI), and 393–413 (IISSWIVTLPAGAFFAIIIFY).

This sequence belongs to the inorganic phosphate transporter (PiT) (TC 2.A.20) family.

It is found in the cell inner membrane. Its function is as follows. Potential transporter for phosphate. This Haemophilus influenzae (strain ATCC 51907 / DSM 11121 / KW20 / Rd) protein is Putative phosphate permease HI_1604.